A 78-amino-acid polypeptide reads, in one-letter code: U7-lycotoxin-Ls1f (78 aa).

The signal sequence occupies residues 1-22; that stretch reads MKLIIFTGLALLLIVSLIDVEA. The propeptide occupies 23-26; sequence QNEG.

This sequence belongs to the neurotoxin 19 (CSTX) family. 07 (U7-Lctx) subfamily. Contains 4 disulfide bonds. Expressed by the venom gland.

It localises to the secreted. The polypeptide is U7-lycotoxin-Ls1f (Lycosa singoriensis (Wolf spider)).